Consider the following 81-residue polypeptide: Three-finger toxin MALT0057C (81 aa).

The first 21 residues, 1–21 (MKTLLLTLVVVTIVCLDFGHT), serve as a signal peptide directing secretion. Cystine bridges form between C24/C43, C38/C60, C62/C73, and C74/C79.

The protein belongs to the three-finger toxin family. Short-chain subfamily. Type I alpha-neurotoxin sub-subfamily. Expressed by the venom gland.

The protein resides in the secreted. Its function is as follows. Binds to muscle nicotinic acetylcholine receptor (nAChR) and inhibit acetylcholine from binding to the receptor, thereby impairing neuromuscular transmission. The sequence is that of Three-finger toxin MALT0057C from Micrurus altirostris (Uruguayan coral snake).